The chain runs to 485 residues: GTPase Obg (485 aa).

The region spanning 2 to 159 is the Obg domain; it reads SKFIDRVVLH…RDLVLELKSV (158 aa). The disordered stretch occupies residues 64–84; sequence PHAKAGNGKPGEGGNRDGKMG. In terms of domain architecture, OBG-type G spans 160 to 340; it reads ADVGLVGFPS…LTFALADLVR (181 aa). GTP is bound by residues 166–173, 191–195, 212–215, 292–295, and 321–323; these read GFPSAGKS, FTTLV, DVPG, NKTD, and SAV. Positions 173 and 193 each coordinate Mg(2+). One can recognise an OCT domain in the interval 358–438; the sequence is PIAVDESGFT…IGDVTFDWEP (81 aa). Over residues 457–469 the composition is skewed to basic and acidic residues; it reads LEQSDRVSAAERK. The segment at 457-485 is disordered; that stretch reads LEQSDRVSAAERKHASRVRRGLVEDDEQR.

The protein belongs to the TRAFAC class OBG-HflX-like GTPase superfamily. OBG GTPase family. In terms of assembly, monomer. Mg(2+) is required as a cofactor.

The protein resides in the cytoplasm. An essential GTPase which binds GTP, GDP and possibly (p)ppGpp with moderate affinity, with high nucleotide exchange rates and a fairly low GTP hydrolysis rate. Plays a role in control of the cell cycle, stress response, ribosome biogenesis and in those bacteria that undergo differentiation, in morphogenesis control. The chain is GTPase Obg from Nocardia farcinica (strain IFM 10152).